The chain runs to 123 residues: Small ribosomal subunit protein uS12 (123 aa).

3-methylthioaspartic acid is present on D89.

It belongs to the universal ribosomal protein uS12 family. As to quaternary structure, part of the 30S ribosomal subunit. Contacts proteins S8 and S17. May interact with IF1 in the 30S initiation complex.

Its function is as follows. With S4 and S5 plays an important role in translational accuracy. In terms of biological role, interacts with and stabilizes bases of the 16S rRNA that are involved in tRNA selection in the A site and with the mRNA backbone. Located at the interface of the 30S and 50S subunits, it traverses the body of the 30S subunit contacting proteins on the other side and probably holding the rRNA structure together. The combined cluster of proteins S8, S12 and S17 appears to hold together the shoulder and platform of the 30S subunit. In Bradyrhizobium diazoefficiens (strain JCM 10833 / BCRC 13528 / IAM 13628 / NBRC 14792 / USDA 110), this protein is Small ribosomal subunit protein uS12.